The chain runs to 305 residues: Tyrosine recombinase XerC (305 aa).

Residues 4–95 (TSIQALINKW…AVKNFYRFLE (92 aa)) form the Core-binding (CB) domain. A Tyr recombinase domain is found at 116-298 (LLPKALSEDD…SIKHLEAVYT (183 aa)). Catalysis depends on residues arginine 159, lysine 182, histidine 250, arginine 253, and histidine 276. Tyrosine 285 acts as the O-(3'-phospho-DNA)-tyrosine intermediate in catalysis.

Belongs to the 'phage' integrase family. XerC subfamily. Forms a cyclic heterotetrameric complex composed of two molecules of XerC and two molecules of XerD.

It localises to the cytoplasm. Its function is as follows. Site-specific tyrosine recombinase, which acts by catalyzing the cutting and rejoining of the recombining DNA molecules. The XerC-XerD complex is essential to convert dimers of the bacterial chromosome into monomers to permit their segregation at cell division. It also contributes to the segregational stability of plasmids. The sequence is that of Tyrosine recombinase XerC from Rickettsia rickettsii (strain Iowa).